We begin with the raw amino-acid sequence, 120 residues long: ATP-dependent Clp protease adapter protein ClpS (120 aa).

A disordered region spans residues Met1–Gly25.

Belongs to the ClpS family. In terms of assembly, binds to the N-terminal domain of the chaperone ClpA.

Involved in the modulation of the specificity of the ClpAP-mediated ATP-dependent protein degradation. This Pseudomonas putida (strain W619) protein is ATP-dependent Clp protease adapter protein ClpS.